The sequence spans 663 residues: UvrABC system protein B (663 aa).

The Helicase ATP-binding domain maps to 26-183 (DGLESGLAKQ…KRLAEMQYTR (158 aa)). An ATP-binding site is contributed by 39 to 46 (GVTGSGKT). Residues 92-115 (YYDYYQPEAYVPASDTFIEKDASI) carry the Beta-hairpin motif. The region spanning 430 to 596 (QVDDLMSEIR…GINKSVEDIL (167 aa)) is the Helicase C-terminal domain. One can recognise a UVR domain in the interval 624-659 (AKQINALEKQMYAHAQNMEFELAAKIRDEYLLLKEQ).

This sequence belongs to the UvrB family. Forms a heterotetramer with UvrA during the search for lesions. Interacts with UvrC in an incision complex.

Its subcellular location is the cytoplasm. The UvrABC repair system catalyzes the recognition and processing of DNA lesions. A damage recognition complex composed of 2 UvrA and 2 UvrB subunits scans DNA for abnormalities. Upon binding of the UvrA(2)B(2) complex to a putative damaged site, the DNA wraps around one UvrB monomer. DNA wrap is dependent on ATP binding by UvrB and probably causes local melting of the DNA helix, facilitating insertion of UvrB beta-hairpin between the DNA strands. Then UvrB probes one DNA strand for the presence of a lesion. If a lesion is found the UvrA subunits dissociate and the UvrB-DNA preincision complex is formed. This complex is subsequently bound by UvrC and the second UvrB is released. If no lesion is found, the DNA wraps around the other UvrB subunit that will check the other stand for damage. This chain is UvrABC system protein B, found in Legionella pneumophila (strain Corby).